The primary structure comprises 179 residues: Prion-like protein doppel (179 aa).

Positions 1–25 are cleaved as a signal peptide; sequence MKNRLGTWWVAILCMLLASHLSTVK. Positions 27–50 are flexible tail; the sequence is RGIKHRFKWNRKVLPSSGGQITEA. The segment at 51–155 is globular; it reads RVAENRPGAF…KHCDFWLERG (105 aa). Cystine bridges form between C95–C148 and C109–C143. N-linked (GlcNAc...) asparagine glycans are attached at residues N99 and N111. The cu(2+) binding stretch occupies residues 125 to 142; that stretch reads KQDSKLHQRVLWRLIKEI. The GPI-anchor amidated glycine moiety is linked to residue G155. Positions 156–179 are cleaved as a propeptide — removed in mature form; it reads AALRVAVDQPAMVCLLGFVWFIVK.

Belongs to the prion family. N-glycosylated. N-glycosylated at two distinct sites. Post-translationally, O-glycosylated. As to expression, detected in testis. Detected within seminiferous tubules, on round and elongated spermatids (at protein level). Not detected in brain (at protein level). Detected in testis, and at low levels in heart. Expression in brain is very low and barely detectable.

The protein localises to the cell membrane. Functionally, required for normal acrosome reaction and for normal male fertility. Can bind Cu(2+). In Mus musculus (Mouse), this protein is Prion-like protein doppel (Prnd).